We begin with the raw amino-acid sequence, 358 residues long: Ion-translocating oxidoreductase complex subunit D (358 aa).

4 helical membrane passes run 19–39 (IMLW…YYFG), 41–61 (GVVL…FIAI), 79–99 (LTAL…IIII), and 125–145 (IGYV…MPPI). The residue at position 186 (threonine 186) is an FMN phosphoryl threonine. 5 consecutive transmembrane segments (helical) span residues 220 to 240 (FAQG…FLIL), 248 to 268 (IPVA…FTGF), 271 to 291 (LSAI…FIAT), 297 to 317 (SITP…VYLI), and 321 to 341 (GNYP…VPLI).

Belongs to the NqrB/RnfD family. In terms of assembly, the complex is composed of six subunits: RnfA, RnfB, RnfC, RnfD, RnfE and RnfG. It depends on FMN as a cofactor.

The protein resides in the cell inner membrane. Part of a membrane-bound complex that couples electron transfer with translocation of ions across the membrane. The protein is Ion-translocating oxidoreductase complex subunit D of Haemophilus influenzae (strain 86-028NP).